A 152-amino-acid chain; its full sequence is Ribosome maturation factor RimP (152 aa).

Belongs to the RimP family.

The protein resides in the cytoplasm. Functionally, required for maturation of 30S ribosomal subunits. The chain is Ribosome maturation factor RimP from Yersinia pestis.